A 323-amino-acid polypeptide reads, in one-letter code: 2-methylene-furan-3-one reductase (323 aa).

Residues K59, 174–175 (GV), 197–200 (STKK), Y216, I254, 265–267 (FVL), and 312–313 (RA) each bind NADP(+). Position 59 (K59) interacts with substrate.

The protein belongs to the zinc-containing alcohol dehydrogenase family. Quinone oxidoreductase subfamily. As to quaternary structure, monomer. The N-terminus is blocked. As to expression, expressed in parenchyma tissues of red fruits. Not found in vascular tissues. Also detected in the achenes.

It carries out the reaction 4-hydroxy-2,5-dimethyl-furan-3(2H)-one + NADP(+) = 4-hydroxy-5-methyl-2-methylenefuran-3(2H)-one + NADPH + H(+). In terms of biological role, enone oxidoreductase involved in the biosynthesis of 4-hydroxy-2,5-dimethyl-3(2H)-furanone (HDMF or furaneol), the key flavor compound in strawberries. Can use both NADH and NADPH as the electron donor. This chain is 2-methylene-furan-3-one reductase (EO), found in Fragaria ananassa (Strawberry).